Consider the following 138-residue polypeptide: MLSPKRTKFRKQHKGRIHGLAKGGTDLNFGSFGLKAVEPERVTARQIEAARRAITRHMKRQGRLWIRIFPDVPVSKKPAEVRMGSGKGSPEFWVARVKPGRVMFELDGVPEDIARGAFELAAAKLPLKTKFIARIGEV.

Belongs to the universal ribosomal protein uL16 family. As to quaternary structure, part of the 50S ribosomal subunit.

Functionally, binds 23S rRNA and is also seen to make contacts with the A and possibly P site tRNAs. The protein is Large ribosomal subunit protein uL16 of Rhodospirillum rubrum (strain ATCC 11170 / ATH 1.1.1 / DSM 467 / LMG 4362 / NCIMB 8255 / S1).